We begin with the raw amino-acid sequence, 136 residues long: Protein PsiE (136 aa).

Transmembrane regions (helical) follow at residues 15–35 (ILQNVLNLGLLTLGLILVVFL), 55–75 (YELVEGLVIYFLYFEFIALIV), 83–103 (HFPLRYFVYIGITAIVRLIIV), and 108–128 (PMDVLLYSAAILLLVITLWLC).

The protein belongs to the PsiE family.

Its subcellular location is the cell inner membrane. This chain is Protein PsiE, found in Salmonella agona (strain SL483).